A 302-amino-acid chain; its full sequence is Acetylglutamate kinase (302 aa).

Residues 75–76 (GG), R97, and N198 contribute to the substrate site.

The protein belongs to the acetylglutamate kinase family. ArgB subfamily.

It is found in the cytoplasm. It carries out the reaction N-acetyl-L-glutamate + ATP = N-acetyl-L-glutamyl 5-phosphate + ADP. It participates in amino-acid biosynthesis; L-arginine biosynthesis; N(2)-acetyl-L-ornithine from L-glutamate: step 2/4. Functionally, catalyzes the ATP-dependent phosphorylation of N-acetyl-L-glutamate. In Leifsonia xyli subsp. xyli (strain CTCB07), this protein is Acetylglutamate kinase.